A 330-amino-acid chain; its full sequence is Intraflagellar transport protein 46 homolog (330 aa).

Disordered regions lie at residues 1–21 (MDRP…ATPR) and 55–112 (SIKT…EGVY). Residues 7 to 16 (ETVDIPDSED) show a composition bias toward acidic residues. The span at 68–79 (SSSEKLCDRGSS) shows a compositional bias: basic and acidic residues. Residues 80 to 101 (DDDDDDDNDDDEDEDDDDDDEN) are compositionally biased toward acidic residues.

This sequence belongs to the IFT46 family.

Its subcellular location is the cytoplasm. It localises to the cytoskeleton. The protein localises to the cilium basal body. The protein resides in the cell projection. It is found in the cilium. In terms of biological role, forms part of a complex involved in intraflagellar transport (IFT), the bi-directional movement of particles required for the assembly, maintenance and functioning of primary cilia. The chain is Intraflagellar transport protein 46 homolog from Schistosoma japonicum (Blood fluke).